We begin with the raw amino-acid sequence, 336 residues long: GTP 3',8-cyclase (336 aa).

The Radical SAM core domain occupies 16 to 241 (AYRRTYYYLR…QSKGITDGPA (226 aa)). Position 25 (Arg-25) interacts with GTP. Residues Cys-32 and Cys-36 each coordinate [4Fe-4S] cluster. Tyr-38 serves as a coordination point for S-adenosyl-L-methionine. Cys-39 serves as a coordination point for [4Fe-4S] cluster. Arg-75 contacts GTP. Gly-79 contacts S-adenosyl-L-methionine. Thr-106 provides a ligand contact to GTP. Ser-130 is a binding site for S-adenosyl-L-methionine. Lys-167 contributes to the GTP binding site. S-adenosyl-L-methionine is bound at residue Met-201. [4Fe-4S] cluster-binding residues include Cys-264 and Cys-267. 269-271 (RLR) lines the GTP pocket. Cys-281 is a binding site for [4Fe-4S] cluster.

Belongs to the radical SAM superfamily. MoaA family. In terms of assembly, monomer and homodimer. Requires [4Fe-4S] cluster as cofactor.

The catalysed reaction is GTP + AH2 + S-adenosyl-L-methionine = (8S)-3',8-cyclo-7,8-dihydroguanosine 5'-triphosphate + 5'-deoxyadenosine + L-methionine + A + H(+). It participates in cofactor biosynthesis; molybdopterin biosynthesis. Functionally, catalyzes the cyclization of GTP to (8S)-3',8-cyclo-7,8-dihydroguanosine 5'-triphosphate. The sequence is that of GTP 3',8-cyclase from Actinobacillus succinogenes (strain ATCC 55618 / DSM 22257 / CCUG 43843 / 130Z).